The following is a 95-amino-acid chain: Aspartyl/glutamyl-tRNA(Asn/Gln) amidotransferase subunit C (95 aa).

The protein belongs to the GatC family. In terms of assembly, heterotrimer of A, B and C subunits.

It carries out the reaction L-glutamyl-tRNA(Gln) + L-glutamine + ATP + H2O = L-glutaminyl-tRNA(Gln) + L-glutamate + ADP + phosphate + H(+). The catalysed reaction is L-aspartyl-tRNA(Asn) + L-glutamine + ATP + H2O = L-asparaginyl-tRNA(Asn) + L-glutamate + ADP + phosphate + 2 H(+). Allows the formation of correctly charged Asn-tRNA(Asn) or Gln-tRNA(Gln) through the transamidation of misacylated Asp-tRNA(Asn) or Glu-tRNA(Gln) in organisms which lack either or both of asparaginyl-tRNA or glutaminyl-tRNA synthetases. The reaction takes place in the presence of glutamine and ATP through an activated phospho-Asp-tRNA(Asn) or phospho-Glu-tRNA(Gln). In Rhizobium johnstonii (strain DSM 114642 / LMG 32736 / 3841) (Rhizobium leguminosarum bv. viciae), this protein is Aspartyl/glutamyl-tRNA(Asn/Gln) amidotransferase subunit C.